The sequence spans 97 residues: MRLSYILVVVIAVTLQACVCATPVIKEANQAMLANGPLPSIVNTEGGRLLRGVKKRTAEREVQEERMSGAKLSEKGKQFLKWFFRGSDTRVKGRSWR.

The first 21 residues, 1–21 (MRLSYILVVVIAVTLQACVCA), serve as a signal peptide directing secretion. Residues 48-66 (RLLRGVKKRTAEREVQEER) carry the RxLR-dEER motif.

The protein belongs to the RxLR effector family.

It localises to the secreted. It is found in the host cell membrane. Functionally, effector that is involved in host plant infection. Contributes to virulence during the early infection stage, by inhibiting plant defense responses induced by both PAMP-triggered immunity (PTI) and effector-triggered immunity (ETI). The polypeptide is RxLR effector protein PexRD21 (Phytophthora infestans (strain T30-4) (Potato late blight agent)).